The following is a 482-amino-acid chain: Glutamate--tRNA ligase 1 (482 aa).

A 'HIGH' region motif is present at residues 18-28; sequence PSPTGYLHLGG. Residues 252-256 carry the 'KMSKS' region motif; sequence KLSKR. Position 255 (Lys255) interacts with ATP.

Belongs to the class-I aminoacyl-tRNA synthetase family. Glutamate--tRNA ligase type 1 subfamily. Monomer.

The protein localises to the cytoplasm. It carries out the reaction tRNA(Glu) + L-glutamate + ATP = L-glutamyl-tRNA(Glu) + AMP + diphosphate. Functionally, catalyzes the attachment of glutamate to tRNA(Glu) in a two-step reaction: glutamate is first activated by ATP to form Glu-AMP and then transferred to the acceptor end of tRNA(Glu). This Erythrobacter litoralis (strain HTCC2594) protein is Glutamate--tRNA ligase 1.